Here is a 72-residue protein sequence, read N- to C-terminus: Large ribosomal subunit protein bL31 (72 aa).

This sequence belongs to the bacterial ribosomal protein bL31 family. Type A subfamily. As to quaternary structure, part of the 50S ribosomal subunit.

Its function is as follows. Binds the 23S rRNA. The sequence is that of Large ribosomal subunit protein bL31 from Deinococcus geothermalis (strain DSM 11300 / CIP 105573 / AG-3a).